The primary structure comprises 257 residues: Type III pantothenate kinase (257 aa).

6-13 lines the ATP pocket; the sequence is DVGNTSTK. 109 to 112 provides a ligand contact to substrate; that stretch reads GADR. D111 acts as the Proton acceptor in catalysis. A K(+)-binding site is contributed by D132. Residue T135 coordinates ATP. T187 lines the substrate pocket.

This sequence belongs to the type III pantothenate kinase family. In terms of assembly, homodimer. The cofactor is NH4(+). K(+) serves as cofactor.

The protein localises to the cytoplasm. It carries out the reaction (R)-pantothenate + ATP = (R)-4'-phosphopantothenate + ADP + H(+). Its pathway is cofactor biosynthesis; coenzyme A biosynthesis; CoA from (R)-pantothenate: step 1/5. Its function is as follows. Catalyzes the phosphorylation of pantothenate (Pan), the first step in CoA biosynthesis. The chain is Type III pantothenate kinase from Anaplasma marginale (strain St. Maries).